The chain runs to 459 residues: Trigger factor (459 aa).

The PPIase FKBP-type domain occupies 166 to 245; it reads GDFANIDLTA…VNSVKAEELP (80 aa).

It belongs to the FKBP-type PPIase family. Tig subfamily.

The protein resides in the cytoplasm. The catalysed reaction is [protein]-peptidylproline (omega=180) = [protein]-peptidylproline (omega=0). In terms of biological role, involved in protein export. Acts as a chaperone by maintaining the newly synthesized protein in an open conformation. Functions as a peptidyl-prolyl cis-trans isomerase. This chain is Trigger factor, found in Bifidobacterium longum subsp. infantis (strain ATCC 15697 / DSM 20088 / JCM 1222 / NCTC 11817 / S12).